The chain runs to 208 residues: MAKLAKNKQMAVLNYIHKQVEDHGYPPTVREICSAVGLSSTSTVHGHISRLIEQGFLQKDPSKPRALEITPKGLDILGVKPIQKEIPMLGVVTAGQPILAVENATEFFPIPPSIQDNNDLFMLTIRGTSMIKAGIFNGDQVIVRKQSTAKNGDIVIAMNDDNEATCKRFYKEKTRFRLQPENDTMEPIFLDNVKILGKVVGLFRDHIF.

The segment at residues 29-49 is a DNA-binding region (H-T-H motif); that stretch reads VREICSAVGLSSTSTVHGHIS. Residues serine 129 and lysine 167 each act as for autocatalytic cleavage activity in the active site.

It belongs to the peptidase S24 family. Homodimer.

The enzyme catalyses Hydrolysis of Ala-|-Gly bond in repressor LexA.. Its function is as follows. Represses a number of genes involved in the response to DNA damage (SOS response), including recA and lexA. In the presence of single-stranded DNA, RecA interacts with LexA causing an autocatalytic cleavage which disrupts the DNA-binding part of LexA, leading to derepression of the SOS regulon and eventually DNA repair. This Limosilactobacillus reuteri (strain DSM 20016) (Lactobacillus reuteri) protein is LexA repressor.